The chain runs to 519 residues: Berghepain-1 (519 aa).

Residues 1 to 32 (MINDIRRINITTSSIESLNENSKYLKRNHKRT) are Cytoplasmic-facing. The chain crosses the membrane as a helical; Signal-anchor for type II membrane protein span at residues 33–53 (IKICAYAITTFALFFIVVVYF). The Lumenal portion of the chain corresponds to 54-519 (KNQTNVNDAN…IGIDVFFPIL (466 aa)). N55 and N143 each carry an N-linked (GlcNAc...) asparagine glycan. Intrachain disulfides connect C298–C340, C333–C373, C358–C378, and C427–C508. Residue C301 is part of the active site. An N-linked (GlcNAc...) asparagine glycan is attached at N432. Active-site residues include H433 and N483.

This sequence belongs to the peptidase C1 family.

It localises to the membrane. Its function is as follows. Cysteine protease. Required for host hepatocyte-derived merozoite infectivity and to a lesser extent for host erythrocyte-derived merozoite infectivity. The chain is Berghepain-1 from Plasmodium berghei (strain Anka).